Reading from the N-terminus, the 169-residue chain is Peptide deformylase (169 aa).

The Fe cation site is built by Cys91 and His133. Residue Glu134 is part of the active site. Residue His137 coordinates Fe cation.

The protein belongs to the polypeptide deformylase family. The cofactor is Fe(2+).

The enzyme catalyses N-terminal N-formyl-L-methionyl-[peptide] + H2O = N-terminal L-methionyl-[peptide] + formate. Its function is as follows. Removes the formyl group from the N-terminal Met of newly synthesized proteins. Requires at least a dipeptide for an efficient rate of reaction. N-terminal L-methionine is a prerequisite for activity but the enzyme has broad specificity at other positions. The protein is Peptide deformylase of Hydrogenovibrio crunogenus (strain DSM 25203 / XCL-2) (Thiomicrospira crunogena).